The following is a 201-amino-acid chain: Ribosomal RNA large subunit methyltransferase E (201 aa).

5 residues coordinate S-adenosyl-L-methionine: G49, W51, D69, D90, and D113. K153 functions as the Proton acceptor in the catalytic mechanism.

The protein belongs to the class I-like SAM-binding methyltransferase superfamily. RNA methyltransferase RlmE family.

Its subcellular location is the cytoplasm. It carries out the reaction uridine(2552) in 23S rRNA + S-adenosyl-L-methionine = 2'-O-methyluridine(2552) in 23S rRNA + S-adenosyl-L-homocysteine + H(+). Its function is as follows. Specifically methylates the uridine in position 2552 of 23S rRNA at the 2'-O position of the ribose in the fully assembled 50S ribosomal subunit. The chain is Ribosomal RNA large subunit methyltransferase E from Desulfotalea psychrophila (strain LSv54 / DSM 12343).